Here is a 604-residue protein sequence, read N- to C-terminus: Glutamine--fructose-6-phosphate aminotransferase [isomerizing] (604 aa).

Cys2 serves as the catalytic Nucleophile; for GATase activity. Residues 2-219 enclose the Glutamine amidotransferase type-2 domain; that stretch reads CGIMGAVSER…EGDSACVTTQ (218 aa). SIS domains lie at 279–427 and 454–594; these read LRAS…DNRA and LASL…VDQP. The For Fru-6P isomerization activity role is filled by Lys599.

Homodimer.

It is found in the cytoplasm. The catalysed reaction is D-fructose 6-phosphate + L-glutamine = D-glucosamine 6-phosphate + L-glutamate. Functionally, catalyzes the first step in hexosamine metabolism, converting fructose-6P into glucosamine-6P using glutamine as a nitrogen source. The sequence is that of Glutamine--fructose-6-phosphate aminotransferase [isomerizing] from Legionella pneumophila (strain Paris).